Consider the following 129-residue polypeptide: UPF0225 protein XOO0258 (129 aa).

It belongs to the UPF0225 family.

The chain is UPF0225 protein XOO0258 from Xanthomonas oryzae pv. oryzae (strain MAFF 311018).